The chain runs to 286 residues: Bifunctional protein FolD (286 aa).

Residues 165 to 167 (GRS) and serine 190 contribute to the NADP(+) site.

Belongs to the tetrahydrofolate dehydrogenase/cyclohydrolase family. As to quaternary structure, homodimer.

The enzyme catalyses (6R)-5,10-methylene-5,6,7,8-tetrahydrofolate + NADP(+) = (6R)-5,10-methenyltetrahydrofolate + NADPH. It catalyses the reaction (6R)-5,10-methenyltetrahydrofolate + H2O = (6R)-10-formyltetrahydrofolate + H(+). It participates in one-carbon metabolism; tetrahydrofolate interconversion. Functionally, catalyzes the oxidation of 5,10-methylenetetrahydrofolate to 5,10-methenyltetrahydrofolate and then the hydrolysis of 5,10-methenyltetrahydrofolate to 10-formyltetrahydrofolate. This chain is Bifunctional protein FolD, found in Staphylococcus aureus (strain MRSA252).